The following is a 128-amino-acid chain: Small ribosomal subunit protein uS11 (128 aa).

It belongs to the universal ribosomal protein uS11 family. As to quaternary structure, part of the 30S ribosomal subunit. Interacts with proteins S7 and S18. Binds to IF-3.

Located on the platform of the 30S subunit, it bridges several disparate RNA helices of the 16S rRNA. Forms part of the Shine-Dalgarno cleft in the 70S ribosome. The protein is Small ribosomal subunit protein uS11 of Onion yellows phytoplasma (strain OY-M).